The chain runs to 715 residues: Fatty acid oxidation complex subunit alpha (715 aa).

Residues 1–190 form an enoyl-CoA hydratase region; that stretch reads MTTTSAFMLN…RAGLVDDVVP (190 aa). Positions 306–715 are 3-hydroxyacyl-CoA dehydrogenase; sequence GPLNSVGILG…WTNGETDQGN (410 aa).

It in the N-terminal section; belongs to the enoyl-CoA hydratase/isomerase family. In the central section; belongs to the 3-hydroxyacyl-CoA dehydrogenase family. As to quaternary structure, heterotetramer of two alpha chains (FadJ) and two beta chains (FadI).

The protein localises to the cytoplasm. It catalyses the reaction a (3S)-3-hydroxyacyl-CoA = a (2E)-enoyl-CoA + H2O. The enzyme catalyses a 4-saturated-(3S)-3-hydroxyacyl-CoA = a (3E)-enoyl-CoA + H2O. It carries out the reaction a (3S)-3-hydroxyacyl-CoA + NAD(+) = a 3-oxoacyl-CoA + NADH + H(+). The catalysed reaction is (3S)-3-hydroxybutanoyl-CoA = (3R)-3-hydroxybutanoyl-CoA. It participates in lipid metabolism; fatty acid beta-oxidation. In terms of biological role, catalyzes the formation of a hydroxyacyl-CoA by addition of water on enoyl-CoA. Also exhibits 3-hydroxyacyl-CoA epimerase and 3-hydroxyacyl-CoA dehydrogenase activities. This Salmonella schwarzengrund (strain CVM19633) protein is Fatty acid oxidation complex subunit alpha.